We begin with the raw amino-acid sequence, 261 residues long: Arcelin-5B (261 aa).

An N-terminal signal peptide occupies residues 1–21 (MASSKLLSLALFLVLLTHANS). Asn91 and Asn100 each carry an N-linked (GlcNAc...) asparagine glycan. Cys167 and Cys203 are joined by a disulfide.

This sequence belongs to the leguminous lectin family. Monomer.

Its function is as follows. Seed storage. This carbohydrate-binding lectin has toxic effects on bean bruchid pests. This Phaseolus vulgaris (Kidney bean) protein is Arcelin-5B (ARC5B).